The sequence spans 2209 residues: Genome polyprotein (2209 aa).

Glycine 2 carries N-myristoyl glycine; by host lipidation. Over 2-1520 the chain is Cytoplasmic; it reads GAQVSSQKVG…NINRAMTILQ (1519 aa). The amphipathic alpha-helix stretch occupies residues 580–600; sequence GLGQMLESMIDNTVRETVGAA. The interval 599-619 is disordered; it reads AATSRDALPNTEASGPTHSKE. Catalysis depends on for protease 2A activity residues histidine 901 and aspartate 919. 2 residues coordinate Zn(2+): cysteine 936 and cysteine 938. Catalysis depends on cysteine 990, which acts as the For protease 2A activity. Residues cysteine 996 and histidine 998 each coordinate Zn(2+). The interval 1128-1200 is membrane-binding; it reads GDSWLKKFTE…HQSCPSQEHQ (73 aa). Positions 1128–1266 are oligomerization; that stretch reads GDSWLKKFTE…SPGTGKSVAT (139 aa). Residues 1149–1153 are RNA-binding; it reads SNKIS. In terms of domain architecture, SF3 helicase spans 1232 to 1388; sequence EHTINNYIQF…NEYSRDGKLN (157 aa). Residue 1256 to 1263 participates in ATP binding; sequence GSPGTGKS. Positions 1396, 1399, 1408, and 1413 each coordinate Zn(2+). A C4-type zinc finger spans residues 1396-1413; sequence CKNCHQPANFKRCCPLVC. The tract at residues 1440-1447 is RNA-binding; sequence ERNRRSNI. The tract at residues 1451 to 1456 is oligomerization; it reads MEALFQ. The stretch at 1521–1536 is an intramembrane region; it reads AVTTFAAVAGVVYVMY. The Cytoplasmic segment spans residues 1537-2209; sequence KLFAGHQGAY…TLYRRWLDSF (673 aa). Residue tyrosine 1546 is modified to O-(5'-phospho-RNA)-tyrosine. Residue tyrosine 1546 is modified to O-UMP-tyrosine; transient. Residues 1566-1744 enclose the Peptidase C3 domain; sequence GPGFDYAVAM…FAAALKRSYF (179 aa). Active-site for protease 3C activity residues include histidine 1605, glutamate 1636, and cysteine 1712. Residues 1975–2090 form the RdRp catalytic domain; it reads EKLFAFDYTG…SYPHEVDASL (116 aa). Positions 1981 and 2076 each coordinate Mg(2+).

This sequence belongs to the picornaviruses polyprotein family. As to quaternary structure, interacts with capsid protein VP1 and capsid protein VP3 to form heterotrimeric protomers. Interacts with capsid protein VP0, and capsid protein VP3 to form heterotrimeric protomers. Five protomers subsequently associate to form pentamers which serve as building blocks for the capsid. Interacts with capsid protein VP2, capsid protein VP3 and capsid protein VP4 following cleavage of capsid protein VP0. Interacts with human PVR. In terms of assembly, interacts with capsid protein VP1 and capsid protein VP3 in the mature capsid. As to quaternary structure, interacts with capsid protein VP0 and capsid protein VP1 to form heterotrimeric protomers. Five protomers subsequently associate to form pentamers which serve as building blocks for the capsid. Interacts with capsid protein VP4 in the mature capsid. Interacts with protein 2C; this interaction may be important for virion morphogenesis. Interacts with capsid protein VP1 and capsid protein VP3. In terms of assembly, homodimer. As to quaternary structure, homohexamer; forms a hexameric ring structure with 6-fold symmetry characteristic of AAA+ ATPases. Interacts (via N-terminus) with host RTN3 (via reticulon domain); this interaction is important for viral replication. Interacts with capsid protein VP3; this interaction may be important for virion morphogenesis. Interacts with protein 3CD. In terms of assembly, homodimer. Interacts with host GBF1. Interacts (via GOLD domain) with host ACBD3 (via GOLD domain); this interaction allows the formation of a viral protein 3A/ACBD3 heterotetramer with a 2:2 stoichiometry, which will stimulate the recruitment of host PI4KB in order to synthesize PI4P at the viral RNA replication sites. As to quaternary structure, interacts with RNA-directed RNA polymerase. Interacts with protein 3AB and with RNA-directed RNA polymerase. In terms of assembly, interacts with Viral protein genome-linked and with protein 3CD. Mg(2+) is required as a cofactor. In terms of processing, specific enzymatic cleavages in vivo by the viral proteases yield processing intermediates and the mature proteins. Post-translationally, myristoylation is required for the formation of pentamers during virus assembly. Further assembly of 12 pentamers and a molecule of genomic RNA generates the provirion. During virion maturation, immature virions are rendered infectious following cleavage of VP0 into VP4 and VP2. This maturation seems to be an autocatalytic event triggered by the presence of RNA in the capsid and it is followed by a conformational change infectious virion. In terms of processing, myristoylation is required during RNA encapsidation and formation of the mature virus particle. Post-translationally, VPg is uridylylated by the polymerase into VPg-pUpU. This acts as a nucleotide-peptide primer for the genomic RNA replication.

The protein localises to the virion. It is found in the host cytoplasm. The protein resides in the host cytoplasmic vesicle membrane. Its subcellular location is the host nucleus. The enzyme catalyses RNA(n) + a ribonucleoside 5'-triphosphate = RNA(n+1) + diphosphate. It carries out the reaction Selective cleavage of Tyr-|-Gly bond in the picornavirus polyprotein.. The catalysed reaction is a ribonucleoside 5'-triphosphate + H2O = a ribonucleoside 5'-diphosphate + phosphate + H(+). It catalyses the reaction Selective cleavage of Gln-|-Gly bond in the poliovirus polyprotein. In other picornavirus reactions Glu may be substituted for Gln, and Ser or Thr for Gly.. With respect to regulation, replication or transcription is subject to high level of random mutations by the nucleotide analog ribavirin. Functionally, forms an icosahedral capsid of pseudo T=3 symmetry with capsid proteins VP2 and VP3. The capsid is 300 Angstroms in diameter, composed of 60 copies of each capsid protein and enclosing the viral positive strand RNA genome. Capsid protein VP1 mainly forms the vertices of the capsid. Capsid protein VP1 interacts with host cell receptor PVR to provide virion attachment to target host epithelial cells. This attachment induces virion internalization predominantly through clathrin- and caveolin-independent endocytosis in Hela cells and through caveolin-mediated endocytosis in brain microvascular endothelial cells. Tyrosine kinases are probably involved in the entry process. Virus binding to PVR induces increased junctional permeability and rearrangement of junctional proteins. Modulation of endothelial tight junctions, as well as cytolytic infection of endothelial cells themselves, may result in loss of endothelial integrity which may help the virus to reach the CNS. After binding to its receptor, the capsid undergoes conformational changes. Capsid protein VP1 N-terminus (that contains an amphipathic alpha-helix) and capsid protein VP4 are externalized. Together, they shape a pore in the host membrane through which viral genome is translocated to host cell cytoplasm. Its function is as follows. Forms an icosahedral capsid of pseudo T=3 symmetry with capsid proteins VP1 and VP3. The capsid is 300 Angstroms in diameter, composed of 60 copies of each capsid protein and enclosing the viral positive strand RNA genome. In terms of biological role, forms an icosahedral capsid of pseudo T=3 symmetry with capsid proteins VP2 and VP1. The capsid is 300 Angstroms in diameter, composed of 60 copies of each capsid protein and enclosing the viral positive strand RNA genome. Lies on the inner surface of the capsid shell. After binding to the host receptor, the capsid undergoes conformational changes. Capsid protein VP4 is released, Capsid protein VP1 N-terminus is externalized, and together, they shape a pore in the host membrane through which the viral genome is translocated into the host cell cytoplasm. Functionally, component of immature procapsids, which is cleaved into capsid proteins VP4 and VP2 after maturation. Allows the capsid to remain inactive before the maturation step. Its function is as follows. Cysteine protease that cleaves viral polyprotein and specific host proteins. It is responsible for the autocatalytic cleavage between the P1 and P2 regions, which is the first cleavage occurring in the polyprotein. Also cleaves the host translation initiation factor EIF4G1, in order to shut down the capped cellular mRNA translation. Inhibits the host nucleus-cytoplasm protein and RNA trafficking by cleaving host members of the nuclear pores including NUP98, NUP62 and NUP153. Counteracts stress granule formation probably by antagonizing its assembly or promoting its dissassembly. Cleaves and inhibits host IFIH1/MDA5, thereby inhibiting the type-I IFN production and the establishment of the antiviral state. Cleaves and inhibits host MAVS, thereby inhibiting the type-I IFN production and the establishment of the antiviral state. In terms of biological role, plays an essential role in the virus replication cycle by acting as a viroporin. Creates a pore in the host endoplasmic reticulum and as a consequence releases Ca2+ in the cytoplasm of infected cell. In turn, high levels of cytoplasmic calcium may trigger membrane trafficking and transport of viral ER-associated proteins to viroplasms, sites of viral genome replication. Induces and associates with structural rearrangements of intracellular membranes. Displays RNA-binding, nucleotide binding and NTPase activities. May play a role in virion morphogenesis and viral RNA encapsidation by interacting with the capsid protein VP3. Functionally, localizes the viral replication complex to the surface of membranous vesicles. Together with protein 3CD binds the Cis-Active RNA Element (CRE) which is involved in RNA synthesis initiation. Acts as a cofactor to stimulate the activity of 3D polymerase, maybe through a nucleid acid chaperone activity. Its function is as follows. Localizes the viral replication complex to the surface of membranous vesicles. It inhibits host cell endoplasmic reticulum-to-Golgi apparatus transport and causes the disassembly of the Golgi complex, possibly through GBF1 interaction. This would result in depletion of MHC, trail receptors and IFN receptors at the host cell surface. Plays an essential role in viral RNA replication by recruiting ACBD3 and PI4KB at the viral replication sites, thereby allowing the formation of the rearranged membranous structures where viral replication takes place. In terms of biological role, acts as a primer for viral RNA replication and remains covalently bound to viral genomic RNA. VPg is uridylylated prior to priming replication into VPg-pUpU. The oriI viral genomic sequence may act as a template for this. The VPg-pUpU is then used as primer on the genomic RNA poly(A) by the RNA-dependent RNA polymerase to replicate the viral genome. During genome replication, the VPg-RNA linkage is removed by the host TDP2, thereby accelerating replication. During the late stage of the replication cycle, host TDP2 is excluded from sites of viral RNA synthesis and encapsidation, allowing for the generation of progeny virions. Involved in the viral replication complex and viral polypeptide maturation. It exhibits protease activity with a specificity and catalytic efficiency that is different from protease 3C. Protein 3CD binds to the 5'UTR of the viral genome. Functionally, major viral protease that mediates proteolytic processing of the polyprotein. Cleaves host EIF5B, contributing to host translation shutoff. Cleaves also host PABPC1, contributing to host translation shutoff. Cleaves host RIGI and thus contributes to the inhibition of type I interferon production. Cleaves host NLRP1, triggers host N-glycine-mediated degradation of the autoinhibitory NLRP1 N-terminal fragment. Inhibits the integrated stress response (ISR) in the infected cell by cleaving host G3BP1. Stress granule formation is thus inhibited, which allows protein synthesis and viral replication. Its function is as follows. Replicates the viral genomic RNA on the surface of intracellular membranes. May form linear arrays of subunits that propagate along a strong head-to-tail interaction called interface-I. Covalently attaches UMP to a tyrosine of VPg, which is used to prime RNA synthesis. The positive stranded RNA genome is first replicated at virus induced membranous vesicles, creating a dsRNA genomic replication form. This dsRNA is then used as template to synthesize positive stranded RNA genomes. ss(+)RNA genomes are either translated, replicated or encapsidated. In Homo sapiens (Human), this protein is Genome polyprotein.